The following is a 424-amino-acid chain: Serine--tRNA ligase (424 aa).

233–235 (TAE) lines the L-serine pocket. 264–266 (RRE) serves as a coordination point for ATP. E287 provides a ligand contact to L-serine. ATP is bound at residue 351–354 (EISS). L-serine is bound at residue S386.

It belongs to the class-II aminoacyl-tRNA synthetase family. Type-1 seryl-tRNA synthetase subfamily. In terms of assembly, homodimer. The tRNA molecule binds across the dimer.

It localises to the cytoplasm. The catalysed reaction is tRNA(Ser) + L-serine + ATP = L-seryl-tRNA(Ser) + AMP + diphosphate + H(+). The enzyme catalyses tRNA(Sec) + L-serine + ATP = L-seryl-tRNA(Sec) + AMP + diphosphate + H(+). It functions in the pathway aminoacyl-tRNA biosynthesis; selenocysteinyl-tRNA(Sec) biosynthesis; L-seryl-tRNA(Sec) from L-serine and tRNA(Sec): step 1/1. Functionally, catalyzes the attachment of serine to tRNA(Ser). Is also able to aminoacylate tRNA(Sec) with serine, to form the misacylated tRNA L-seryl-tRNA(Sec), which will be further converted into selenocysteinyl-tRNA(Sec). The sequence is that of Serine--tRNA ligase from Pseudothermotoga lettingae (strain ATCC BAA-301 / DSM 14385 / NBRC 107922 / TMO) (Thermotoga lettingae).